A 592-amino-acid polypeptide reads, in one-letter code: Prospero homeobox protein 2 (592 aa).

Disordered stretches follow at residues 20–56 (EACT…PEWF), 85–129 (GNAQ…RKGG), 155–218 (KPRD…LPSG), 308–336 (RLDS…PLTA), and 353–382 (RYNN…LRPW). Positions 95 to 106 (CPKKARERKRKQ) are enriched in basic residues. Residues 201 to 211 (SGAEKHQESEK) show a composition bias toward basic and acidic residues. Positions 314-331 (YPIPPRMTPKPCQDPPAN) are enriched in pro residues. Residues 360-377 (SSSPPQDSSSQRHPSSEP) show a composition bias toward low complexity. The Prospero-type homeo domain maps to 437–495 (QEGLNPGHLKKAKLMFFFTRYPSSNLLKVYFPDVQFNRCITSQMIKWFSNFREFYYIQM). The homeo-Prospero stretch occupies residues 437-592 (QEGLNPGHLK…EIFKSSSYPQ (156 aa)). The 97-residue stretch at 496–592 (EKSARQAISD…EIFKSSSYPQ (97 aa)) folds into the Prospero domain.

This sequence belongs to the Prospero homeodomain family.

It is found in the nucleus. Transcription regulator. Does not seem to be essential for embryonic development and postnatal survival. In Homo sapiens (Human), this protein is Prospero homeobox protein 2 (PROX2).